A 550-amino-acid chain; its full sequence is Transcription factor 7-like 1-D (550 aa).

An interaction with CTNNB1-A region spans residues 1–61; it reads MPQLNSGXGD…SENHSSDSDS (61 aa). 4 disordered regions span residues 1–77, 182–212, 390–473, and 488–514; these read MPQL…EKPR, GTPPGHLSPEIDPKTGIPRPPHPSELSPYYP, WSAR…SLTT, and ASKSPSSSSLSGHLPSPVGSPLLSRPI. Basic and acidic residues-rich tracts occupy residues 17–32 and 52–77; these read ELIRFKDEGEQEEKSP and SENHSSDSDSEVERRPPPRETFEKPR. The segment at 109 to 311 is interaction with AES and TLE4-A; sequence LGGITCPMVP…SPNLSMKSNV (203 aa). Positions 323 to 391 form a DNA-binding region, HMG box; it reads IKKPLNAFML…LHSQLYPSWS (69 aa). Over residues 406–415 the composition is skewed to basic and acidic residues; it reads KQSPEMENYT. The tract at residues 407–550 is interaction with CTBP-B; sequence QSPEMENYTK…PLPLVARSSD (144 aa). The segment covering 444 to 455 has biased composition (low complexity); sequence SPATPSAALASP.

The protein belongs to the TCF/LEF family. In terms of assembly, interacts with csnk1e, ctnnb1-A, ctbp-B, dact1-A and gsk3b. May interact with ase and tle4-A. In terms of processing, phosphorylated. Phosphorylation by csnk1e promotes binding to ctnnb1-A while phosphorylation by gsk3b may reverse this effect.

It is found in the nucleus. Participates in the Wnt signaling pathway. Binds to DNA and acts as a repressor in the absence of ctnnb1-A and possibly ctnnb1-B, and as an activator in the presence of these proteins. Required early in development for the establishment of the dorsal body axis in response to maternal Wnt signaling. The protein is Transcription factor 7-like 1-D (tcf7l1-d) of Xenopus laevis (African clawed frog).